Reading from the N-terminus, the 159-residue chain is MNPRRKKRLLVIVAVLFGIGASIGLVLYALQENINLFYTPSELVDGKGPNKEKPQIGQKLRIGGMVVPGSVERNEQSLKVSFTLVDTGPTVVVRYQGILPDLFREGQGIVAQGVLVEPNVIEAFEVLAKHDEEYMPAEVAEALKGIKHEKPKYNLDSGN.

The Cytoplasmic portion of the chain corresponds to 1–8 (MNPRRKKR). A helical; Signal-anchor for type II membrane protein transmembrane segment spans residues 9 to 29 (LLVIVAVLFGIGASIGLVLYA). Residues 30–159 (LQENINLFYT…KPKYNLDSGN (130 aa)) are Periplasmic-facing. Residues His-130 and Tyr-134 each coordinate heme.

Belongs to the CcmE/CycJ family.

It is found in the cell inner membrane. Heme chaperone required for the biogenesis of c-type cytochromes. Transiently binds heme delivered by CcmC and transfers the heme to apo-cytochromes in a process facilitated by CcmF and CcmH. The polypeptide is Cytochrome c-type biogenesis protein CcmE (Pseudoalteromonas translucida (strain TAC 125)).